The primary structure comprises 633 residues: DNA mismatch repair protein MutL (633 aa).

This sequence belongs to the DNA mismatch repair MutL/HexB family.

This protein is involved in the repair of mismatches in DNA. It is required for dam-dependent methyl-directed DNA mismatch repair. May act as a 'molecular matchmaker', a protein that promotes the formation of a stable complex between two or more DNA-binding proteins in an ATP-dependent manner without itself being part of a final effector complex. The protein is DNA mismatch repair protein MutL of Bacillus pumilus (strain SAFR-032).